Reading from the N-terminus, the 361-residue chain is Aminomethyltransferase (361 aa).

This sequence belongs to the GcvT family. In terms of assembly, the glycine cleavage system is composed of four proteins: P, T, L and H.

The enzyme catalyses N(6)-[(R)-S(8)-aminomethyldihydrolipoyl]-L-lysyl-[protein] + (6S)-5,6,7,8-tetrahydrofolate = N(6)-[(R)-dihydrolipoyl]-L-lysyl-[protein] + (6R)-5,10-methylene-5,6,7,8-tetrahydrofolate + NH4(+). In terms of biological role, the glycine cleavage system catalyzes the degradation of glycine. In Phocaeicola vulgatus (strain ATCC 8482 / DSM 1447 / JCM 5826 / CCUG 4940 / NBRC 14291 / NCTC 11154) (Bacteroides vulgatus), this protein is Aminomethyltransferase.